The following is a 1319-amino-acid chain: MDVDSDVNVSRLRDELHKVANEETDTATFNDDAPSGATCRICRGEATEDNPLFHPCKCRGSIKYMHESCLLEWVASKNIDISKPGADVKCDICHYPIQFKTIYAENMPEKIPFSLLLSKSILTFFEKARLALTIGLAAVLYIIGVPLVWNMFGKLYTMMLDGSSPYPGDFLKSLIYGYDQSATPELTTRAIFYQLLQNHSFTSLQFIMIVILHIALYFQYDMIVREDVFSKMVFHKIGPRLSPKDLKSRLKERFPMMDDRMVEYLAREMRAHDENRQEQGHDRLNMPAAAADNNNNVINPRNDNVPPQDPNDHRNFENLRHVDELDHDEATEEHENNDSDNSLPSGDDSSRILPGSSSDNEEDEEAEGQQQQQQPEEEADYRDHIEPNPIDMWANRRAQNEFDDLIAAQQNAINRPNAPVFIPPPAQNRAGNVDQDEQDFGAAVGVPPAQANPDDQGQGPLVINLKLKLLNVIAYFIIAVVFTAIYLAISYLFPTFIGFGLLKIYFGIFKVILRGLCHLYYLSGAHIAYNGLTKLVPKVDVAMSWISDHLIHDIIYLYNGYTENTMKHSIFIRALPALTTYLTSVSIVCASSNLVSRGYGRENGMSNPTRRLIFQILFALKCTFKVFTLFFIELAGFPILAGVMLDFSLFCPILASNSRMLWVPSICAIWPPFSLFVYWTIGTLYMYWFAKYIGMIRKNIIRPGVLFFIRSPEDPNIKILHDSLIHPMSIQLSRLCLSMFIYAIFIVLGFGFHTRIFFPFMLKSNLLSVPEAYKPTSIISWKFNTILLTLYFTKRILESSSYVKPLLERYWKTIFKLCSRKLRLSSFILGKDTPTERGHIVYRNLFYKYIAAKNAEWSNQELFTKPKTLEQAEELFGQVRDVHAYFVPDGVLMRVPSSDIVSRNYVQTMFVPVTKDDKLLKPLDLERIKERNKRAAGEFGYLDEQNTEYDQYYIVYVPPDFRLRYMTLLGLVWLFASILMLGVTFISQALINFVCSFGFLPVVKLLLGERNKVYVAWKELSDISYSYLNIYYVCVGSVCLSKIAKDILHFTEGQNTLDEHAVDENEVEEVEHDIPERDINNAPVNNINNVEEGQGIFMAIFNSIFDSMLVKYNLMVFIAIMIAVIRTMVSWVVLTDGILACYNYLTIRVFGNSSYTIGNSKWFKYDESLLFVVWIISSMVNFGTGYKSLKLFFRNRNTSKLNFLKTMALELFKQGFLHMVIYVLPIIILSLVFLRDVSTKQIIDISHGSRSFTLSLNESFPTWTRMQDIYFGLLIALESFTFFFQATVLFIQWFKSTVQNVKDEVYTKGRALENLPDES.

Residue methionine 1 is modified to N-acetylmethionine. The Cytoplasmic portion of the chain corresponds to 1–131 (MDVDSDVNVS…LTFFEKARLA (131 aa)). The RING-CH-type zinc-finger motif lies at 31–100 (DDAPSGATCR…DICHYPIQFK (70 aa)). Zn(2+)-binding residues include cysteine 39, cysteine 42, cysteine 56, cysteine 58, histidine 66, cysteine 69, cysteine 90, and cysteine 93. A helical membrane pass occupies residues 132 to 152 (LTIGLAAVLYIIGVPLVWNMF). Residues 153-203 (GKLYTMMLDGSSPYPGDFLKSLIYGYDQSATPELTTRAIFYQLLQNHSFTS) are Lumenal-facing. A helical transmembrane segment spans residues 204-224 (LQFIMIVILHIALYFQYDMIV). Residues 225–468 (REDVFSKMVF…GPLVINLKLK (244 aa)) are Cytoplasmic-facing. The span at 291–306 (ADNNNNVINPRNDNVP) shows a compositional bias: low complexity. 2 disordered regions span residues 291-315 (ADNN…DHRN) and 329-381 (EATE…EADY). The chain crosses the membrane as a helical span at residues 469–489 (LLNVIAYFIIAVVFTAIYLAI). Over 490 to 491 (SY) the chain is Lumenal. The helical transmembrane segment at 492–512 (LFPTFIGFGLLKIYFGIFKVI) threads the bilayer. At 513 to 626 (LRGLCHLYYL…LFALKCTFKV (114 aa)) the chain is on the cytoplasmic side. Residues 627-647 (FTLFFIELAGFPILAGVMLDF) form a helical membrane-spanning segment. The Lumenal segment spans residues 648–660 (SLFCPILASNSRM). The chain crosses the membrane as a helical span at residues 661-681 (LWVPSICAIWPPFSLFVYWTI). Topologically, residues 682-739 (GTLYMYWFAKYIGMIRKNIIRPGVLFFIRSPEDPNIKILHDSLIHPMSIQLSRLCLSM) are cytoplasmic. Residues 740–760 (FIYAIFIVLGFGFHTRIFFPF) form a helical membrane-spanning segment. The Lumenal portion of the chain corresponds to 761 to 777 (MLKSNLLSVPEAYKPTS). A helical transmembrane segment spans residues 778–797 (IISWKFNTILLTLYFTKRIL). The Cytoplasmic segment spans residues 798-965 (ESSSYVKPLL…YVPPDFRLRY (168 aa)). The chain crosses the membrane as a helical span at residues 966–986 (MTLLGLVWLFASILMLGVTFI). At 987 to 1019 (SQALINFVCSFGFLPVVKLLLGERNKVYVAWKE) the chain is on the lumenal side. Residues 1020–1040 (LSDISYSYLNIYYVCVGSVCL) form a helical membrane-spanning segment. Over 1041 to 1113 (SKIAKDILHF…IFDSMLVKYN (73 aa)) the chain is Cytoplasmic. The chain crosses the membrane as a helical span at residues 1114-1134 (LMVFIAIMIAVIRTMVSWVVL). Topologically, residues 1135-1168 (TDGILACYNYLTIRVFGNSSYTIGNSKWFKYDES) are lumenal. The chain crosses the membrane as a helical span at residues 1169–1189 (LLFVVWIISSMVNFGTGYKSL). Topologically, residues 1190–1213 (KLFFRNRNTSKLNFLKTMALELFK) are cytoplasmic. A helical membrane pass occupies residues 1214-1234 (QGFLHMVIYVLPIIILSLVFL). Topologically, residues 1235–1270 (RDVSTKQIIDISHGSRSFTLSLNESFPTWTRMQDIY) are lumenal. Residues 1271–1291 (FGLLIALESFTFFFQATVLFI) form a helical membrane-spanning segment. Residues 1292 to 1319 (QWFKSTVQNVKDEVYTKGRALENLPDES) are Cytoplasmic-facing.

This sequence belongs to the DOA10/MARCH6 family. In terms of assembly, component of the DOA10 ubiquitin ligase complex which contains E3 ligase SSM4/DOA10 and CDC48-binding protein UBX2/SEL1. The DOA10 complex interacts with the heterotrimeric CDC48-NPL4-UFD1 ATPase complex which is recruited by UBX2/SEL1 via its interaction with CDC48. Interacts with its associated ubiquitin conjugating enzymes UBC6 and UBC7 with its membrane anchor CUE1. Interacts with PEX29.

Its subcellular location is the endoplasmic reticulum membrane. The protein resides in the nucleus inner membrane. It catalyses the reaction S-ubiquitinyl-[E2 ubiquitin-conjugating enzyme]-L-cysteine + [acceptor protein]-L-lysine = [E2 ubiquitin-conjugating enzyme]-L-cysteine + N(6)-ubiquitinyl-[acceptor protein]-L-lysine.. It functions in the pathway protein modification; protein ubiquitination. Its function is as follows. E3 ubiquitin-protein ligase which accepts ubiquitin specifically from endoplasmic reticulum-associated UBC6 and UBC7 E2 ligases, and transfers it to substrates promoting their degradation. Mediates the degradation of a broad range of substrates, including endoplasmic reticulum membrane proteins (ERQC), soluble nuclear proteins and soluble cytoplasmic proteins (CytoQC). Component of the DOA10 ubiquitin ligase complex, which is part of the ERAD-C pathway responsible for the rapid degradation of membrane proteins with misfolded cytoplasmic domains. ERAD-C substrates are ubiquitinated through DOA10 in conjunction with the E2 ubiquitin-conjugating enzymes UBC6 and UBC7-CUE1. Ubiquitinated substrates are then removed to the cytosol via the action of the UFD1-NPL4-CDC48/p97 (UNC) AAA ATPase complex and targeted to the proteasome. Also recognizes the N-terminally acetylated residue of proteins as degradation signal (degron). N-terminally acetylated target proteins include MATALPHA2, TBF1, SLK19, YMR090W, HIS3, HSP104, UBP6 and ARO8. Catalyzes ubiquitination of mislocalized tail-anchored proteins that are extracted from the mitochondrion membrane by MSP1: following extraction, mistargeted proteins are transferred to the endoplasmic reticulum, where they are ubiquitinated by DOA10 and degraded by the proteasome. The protein is ERAD-associated E3 ubiquitin-protein ligase DOA10 (SSM4) of Saccharomyces cerevisiae (strain ATCC 204508 / S288c) (Baker's yeast).